We begin with the raw amino-acid sequence, 327 residues long: tRNA-dihydrouridine(20/20a) synthase (327 aa).

Residues 11-13 and glutamine 63 each bind FMN; that span reads PML. Cysteine 93 serves as the catalytic Proton donor. Residues lysine 132, histidine 165, 205 to 207, and 227 to 228 contribute to the FMN site; these read NGG and GR.

This sequence belongs to the Dus family. DusA subfamily. It depends on FMN as a cofactor.

It carries out the reaction 5,6-dihydrouridine(20) in tRNA + NADP(+) = uridine(20) in tRNA + NADPH + H(+). The catalysed reaction is 5,6-dihydrouridine(20) in tRNA + NAD(+) = uridine(20) in tRNA + NADH + H(+). The enzyme catalyses 5,6-dihydrouridine(20a) in tRNA + NADP(+) = uridine(20a) in tRNA + NADPH + H(+). It catalyses the reaction 5,6-dihydrouridine(20a) in tRNA + NAD(+) = uridine(20a) in tRNA + NADH + H(+). Catalyzes the synthesis of 5,6-dihydrouridine (D), a modified base found in the D-loop of most tRNAs, via the reduction of the C5-C6 double bond in target uridines. Specifically modifies U20 and U20a in tRNAs. The chain is tRNA-dihydrouridine(20/20a) synthase from Vibrio cholerae serotype O1 (strain ATCC 39315 / El Tor Inaba N16961).